A 365-amino-acid polypeptide reads, in one-letter code: Donuts protein 1 (365 aa).

The segment at Asn28–Lys49 is disordered. Residues Glu82 to Ser125 form the CUE domain. Disordered stretches follow at residues His215–Asn246 and Glu286–Ala335. Residues Ser224–Gly244 are compositionally biased toward basic and acidic residues. Over residues Glu286–Val295 the composition is skewed to acidic residues. Positions Glu315 to Gly331 are enriched in basic and acidic residues.

As to quaternary structure, may interact directly with ADY3. Probable component of a spindle pole body (SPB) complex composed of ADY3, SSP1, DON1, MPC54, SPO21/MPC70, NUD1 and CNM67.

Its subcellular location is the prospore membrane. In terms of biological role, involved in the pathway that organizes the prospore membrane (PSM) during sporulation. The polypeptide is Donuts protein 1 (DON1) (Saccharomyces cerevisiae (strain ATCC 204508 / S288c) (Baker's yeast)).